The primary structure comprises 404 residues: Tryptophan synthase beta chain (404 aa).

K94 carries the post-translational modification N6-(pyridoxal phosphate)lysine.

The protein belongs to the TrpB family. Tetramer of two alpha and two beta chains. The cofactor is pyridoxal 5'-phosphate.

It carries out the reaction (1S,2R)-1-C-(indol-3-yl)glycerol 3-phosphate + L-serine = D-glyceraldehyde 3-phosphate + L-tryptophan + H2O. It functions in the pathway amino-acid biosynthesis; L-tryptophan biosynthesis; L-tryptophan from chorismate: step 5/5. The beta subunit is responsible for the synthesis of L-tryptophan from indole and L-serine. This chain is Tryptophan synthase beta chain, found in Staphylococcus aureus (strain MRSA252).